Consider the following 499-residue polypeptide: Zinc finger protein PLAG1 (499 aa).

Residues Met-1 to Asn-33 are disordered. The tract at residues Ala-2–Ala-84 is interaction with KPNA2. A Nuclear localization signal motif is present at residues Lys-22–Arg-25. 7 C2H2-type zinc fingers span residues Phe-34 to His-56, Tyr-62 to His-86, His-92 to His-114, Phe-121 to His-143, Leu-150 to His-172, His-185 to His-207, and Phe-213 to His-236. Residues Lys-41 to Lys-242 are decreased nuclear import with localization in the nucleus but also in the cytoplasm. The tract at residues Val-243 to Leu-383 is repression domain; contains 3 sumoylation motifs and massively decrease transcription activity. Residues Val-243–Gln-499 are activates transcription; Inhibition of nuclear import due to lack of NLS and KPNA2 interaction. Residues Lys-244 and Lys-263 each participate in a glycyl lysine isopeptide (Lys-Gly) (interchain with G-Cter in SUMO) cross-link. The tract at residues Gln-364–Ser-400 is disordered. The segment covering Ser-369 to Ser-379 has biased composition (low complexity). Positions Glu-384–Gln-499 are massively activates transcription.

Belongs to the krueppel C2H2-type zinc-finger protein family. Interacts with KPNA2, which escorts protein to the nucleus via interaction with nuclear localization signal. Interacts with E3 SUMO-protein ligase PIAS1, PIAS2 and PIAS4. Sumoylated with SUMO1; which inhibits transcriptional activity, but does not affect nuclear localization. Blockers of sumoylation pathway such as SENP3 and inactive UBE2I increases transcriptional capacity. Sumoylation is increased in the presence of PIAS1. In terms of processing, acetylated by lysine acetyltransferase EP300; which activates transcriptional capacity. Lysine residues that are sumoylated also seem to be target for acetylation. In terms of tissue distribution, expressed in heart, spleen, lung, kidney, brain, testis and epididymis but not in salivary glands.

It localises to the nucleus. In terms of biological role, transcription factor whose activation results in up-regulation of target genes, such as IGFII, leading to uncontrolled cell proliferation: when overexpressed in cultured cells, higher proliferation rate and transformation are observed. Other target genes such as CRLF1, CRABP2, CRIP2, PIGF are strongly induced in cells with PLAG1 induction. Proto-oncogene whose ectopic expression can trigger the development of pleomorphic adenomas of the salivary gland and lipoblastomas. Cooperates with CBFB-MYH11. The protein is Zinc finger protein PLAG1 (Plag1) of Rattus norvegicus (Rat).